The sequence spans 1120 residues: Elongation factor-like GTPase 1 (1120 aa).

The region spanning 17–272 is the tr-type G domain; sequence ANIRNICVLA…LMKTLWGDYY (256 aa). Residues 26-33, 92-96, and 146-149 each bind GTP; these read AHVDHGKT, DSPGH, and NKID. Residues 430–496 are disordered; it reads PRPLTQEEIA…VESMTPKPVL (67 aa). Composition is skewed to basic and acidic residues over residues 438–452 and 475–484; these read IAQRRERARQRHAEK and PKGEEPRGDE. Lys-528 is subject to N6-acetyllysine. The interval 907-930 is disordered; the sequence is ASDLAKEGQEENETCSGGNENQEL. The span at 920-930 shows a compositional bias: polar residues; sequence TCSGGNENQEL.

The protein belongs to the TRAFAC class translation factor GTPase superfamily. Classic translation factor GTPase family. As to quaternary structure, associates with the 60S ribosomal subunit. Found in a complex consisting of the 60S ribosomal subunit, SBDS and EFL1. Interacts with SBDS and binds to GTP and GDP; the interaction with SBDS decreases EFL1 affinity for GDP and facilitates GDP release. As to expression, expressed at low levels in brain. Expression is highly increased in glioma tissues.

The catalysed reaction is GTP + H2O = GDP + phosphate + H(+). GTPase activity is stimulated in the presence of 60S ribosome subunits. In terms of biological role, GTPase involved in the biogenesis of the 60S ribosomal subunit and translational activation of ribosomes. Together with SBDS, triggers the GTP-dependent release of EIF6 from 60S pre-ribosomes in the cytoplasm, thereby activating ribosomes for translation competence by allowing 80S ribosome assembly and facilitating EIF6 recycling to the nucleus, where it is required for 60S rRNA processing and nuclear export. The chain is Elongation factor-like GTPase 1 from Homo sapiens (Human).